We begin with the raw amino-acid sequence, 710 residues long: Amyloid beta precursor protein binding family B member 1 (710 aa).

A Phosphoserine modification is found at serine 135. Disordered regions lie at residues glutamate 143–proline 256 and glycine 276–leucine 300. Acidic residues predominate over residues glycine 145–leucine 173. The residue at position 204 (lysine 204) is an N6-acetyllysine. Polar residues predominate over residues serine 223–tyrosine 234. Residues serine 253 to arginine 285 enclose the WW domain. The span at serine 287–glutamine 299 shows a compositional bias: low complexity. The 140-residue stretch at phenylalanine 370–alanine 509 folds into the PID 1 domain. Residue serine 459 is modified to Phosphoserine; by PKC. Serine 517 is modified (phosphoserine). Positions lysine 542–serine 699 constitute a PID 2 domain. Tyrosine 547 is modified (phosphotyrosine; by ABL1). Position 610 is a phosphoserine; by SGK1 (serine 610). At lysine 701 the chain carries N6-acetyllysine.

As to quaternary structure, component of a complex, at least composed of APBB1, RASD1/DEXRAS1 and APP. Interacts (via PID domain 2) with APP (with the intracellular domain of the amyloid-beta precursor protein). Interacts (via PID domain 2) with RASD1/DEXRAS1; impairs the transcription activation activity. Interacts (via PID domain 1) with KAT5/TIP60. Interacts (via the WW domain) with the proline-rich region of APBB1IP. Interacts with TSHZ1 and TSHZ2. Interacts (via the WW domain) with histone H2AX (when phosphorylated on 'Tyr-142') and the proline-rich region of ENAH. Interacts with MAPK8. Interacts (via PID domain 1) with TSHZ3 (via homeobox domain). Interacts with SET. Found in a trimeric complex with HDAC1 and TSHZ3; the interaction between HDAC1 and APBB1 is mediated by TSHZ3. Interacts (via WWW domain) with NEK6. Interacts (via WWW domain) with ABL1. Interacts with RNF157. Interacts with ARF6. Polyubiquitination by RNF157 leads to degradation by the proteasome. Post-translationally, phosphorylation at Ser-610 by SGK1 promotes its localization to the nucleus. Phosphorylated following nuclear translocation. Phosphorylation at Tyr-546 by ABL1 enhances transcriptional activation activity and reduces the affinity for RASD1/DEXRAS1. In terms of processing, acetylation at Lys-204 and Lys-701 by KAT5 promotes its transcription activator activity. Phosphorylated at Ser-459 by PKC upon insulin activation. As to expression, expressed in the brain, retinal lens and muscle cells (at protein level).

It localises to the cell membrane. Its subcellular location is the cytoplasm. The protein resides in the nucleus. The protein localises to the cell projection. It is found in the growth cone. It localises to the nucleus speckle. Its function is as follows. Transcription coregulator that can have both coactivator and corepressor functions. Adapter protein that forms a transcriptionally active complex with the gamma-secretase-derived amyloid precursor protein (APP) intracellular domain. Plays a central role in the response to DNA damage by translocating to the nucleus and inducing apoptosis. May act by specifically recognizing and binding histone H2AX phosphorylated on 'Tyr-142' (H2AXY142ph) at double-strand breaks (DSBs), recruiting other pro-apoptosis factors such as MAPK8/JNK1. Required for histone H4 acetylation at double-strand breaks (DSBs). Its ability to specifically bind modified histones and chromatin modifying enzymes such as KAT5/TIP60, probably explains its transcription activation activity. Functions in association with TSHZ3, SET and HDAC factors as a transcriptional repressor, that inhibits the expression of CASP4. Associates with chromatin in a region surrounding the CASP4 transcriptional start site(s). Involved in hippocampal neurite branching and neuromuscular junction formation, as a result plays a role in spatial memory functioning. Plays a role in the maintenance of lens transparency. May play a role in muscle cell strength. Acts as a molecular adapter that functions in neurite outgrowth by activating the RAC1-ARF6 axis upon insulin treatment. This chain is Amyloid beta precursor protein binding family B member 1, found in Mus musculus (Mouse).